Reading from the N-terminus, the 270-residue chain is NAD kinase (270 aa).

Aspartate 57 functions as the Proton acceptor in the catalytic mechanism. NAD(+)-binding positions include 57-58, 125-126, arginine 150, and asparagine 227; these read DG and NE.

Belongs to the NAD kinase family. A divalent metal cation is required as a cofactor.

The protein localises to the cytoplasm. The enzyme catalyses NAD(+) + ATP = ADP + NADP(+) + H(+). Functionally, involved in the regulation of the intracellular balance of NAD and NADP, and is a key enzyme in the biosynthesis of NADP. Catalyzes specifically the phosphorylation on 2'-hydroxyl of the adenosine moiety of NAD to yield NADP. In Ureaplasma parvum serovar 3 (strain ATCC 700970), this protein is NAD kinase.